Reading from the N-terminus, the 472-residue chain is Sulfate adenylyltransferase subunit 1 (472 aa).

Residues 22–239 (KELLRFLTCG…TVPIAGDKNY (218 aa)) form the tr-type G domain. Residues 31-38 (GSVDDGKS) are G1. 31–38 (GSVDDGKS) contacts GTP. Positions 89-93 (GITID) are G2. Residues 110 to 113 (DTPG) form a G3 region. GTP contacts are provided by residues 110 to 114 (DTPGH) and 165 to 168 (NKMD). Residues 165–168 (NKMD) are G4. The segment at 202-204 (SAL) is G5.

It belongs to the TRAFAC class translation factor GTPase superfamily. Classic translation factor GTPase family. CysN/NodQ subfamily. In terms of assembly, heterodimer composed of CysD, the smaller subunit, and CysN.

It catalyses the reaction sulfate + ATP + H(+) = adenosine 5'-phosphosulfate + diphosphate. Its pathway is sulfur metabolism; hydrogen sulfide biosynthesis; sulfite from sulfate: step 1/3. With CysD forms the ATP sulfurylase (ATPS) that catalyzes the adenylation of sulfate producing adenosine 5'-phosphosulfate (APS) and diphosphate, the first enzymatic step in sulfur assimilation pathway. APS synthesis involves the formation of a high-energy phosphoric-sulfuric acid anhydride bond driven by GTP hydrolysis by CysN coupled to ATP hydrolysis by CysD. This chain is Sulfate adenylyltransferase subunit 1, found in Cellvibrio japonicus (strain Ueda107) (Pseudomonas fluorescens subsp. cellulosa).